Here is a 1088-residue protein sequence, read N- to C-terminus: PAN2-PAN3 deadenylation complex catalytic subunit pan2 (1088 aa).

WD repeat units follow at residues 16-56 (VSTC…YTQF), 136-175 (HKDK…PVNK), 178-224 (AHTG…SLVP), and 270-309 (PLTS…SFSD). The interval 309–443 (DLKLPIQLPN…EDTISGPDSI (135 aa)) is linker. Residues 443 to 814 (IPKFYQRPVI…IPIIVYYEKL (372 aa)) enclose the USP domain. Residues 860-1033 (VGIDSEFVAL…EDALTALKLY (174 aa)) form the Exonuclease domain. A divalent metal cation-binding residues include D863, E865, D972, and D1025.

The protein belongs to the peptidase C19 family. PAN2 subfamily. Forms a heterotrimer with an asymmetric homodimer of the regulatory subunit ppk26/pan3 to form the poly(A)-nuclease (PAN) deadenylation complex. It depends on a divalent metal cation as a cofactor.

It is found in the cytoplasm. The enzyme catalyses Exonucleolytic cleavage of poly(A) to 5'-AMP.. Positively regulated by the regulatory subunit ppk26/pan3. Functionally, catalytic subunit of the poly(A)-nuclease (PAN) deadenylation complex, one of two cytoplasmic mRNA deadenylases involved in mRNA turnover. PAN specifically shortens poly(A) tails of RNA and the activity is stimulated by poly(A)-binding protein pab1. PAN deadenylation is followed by rapid degradation of the shortened mRNA tails by the CCR4-NOT complex. Deadenylated mRNAs are then degraded by two alternative mechanisms, namely exosome-mediated 3'-5' exonucleolytic degradation, or deadenylation-dependent mRNA decaping and subsequent 5'-3' exonucleolytic degradation by xrn1. May also be involved in post-transcriptional maturation of mRNA poly(A) tails. The chain is PAN2-PAN3 deadenylation complex catalytic subunit pan2 from Schizosaccharomyces pombe (strain 972 / ATCC 24843) (Fission yeast).